Here is a 510-residue protein sequence, read N- to C-terminus: MPLKLAIVGRPNVGKSTLFNRLVGKKIALVDDQPGVTRDRKMADGRLASLPLSLIDTAGFDNVNDDSLEARMRAQTEAAIAEADLVLFLVDARVGVTPEDETFAGLLRKANIPVVLAANKAEGRAGEAGVFDAFRLGFGEPVGLSAEHGEGMAELYESIRNALGPEAYERALEEAEPDYERGAGEDILEKLAHIDIEDTTLSDDDLVAAIEAADIDADVAEAPVQSDRPIRLAIVGRPNAGKSTLINQLLQSDRMLTGPEAGITRDSITVNWEWEGRQIRLVDTAGLRRKNKVQERLERMSTAETIRSLKYADIVALVMDAHEAMEKQDLQIADLALREGRGVVLVISKWDTVEDTDGAARHIRDLANRLMPNAGGAPVVFLSGLTGRNIEKLMPAVVKVYKDWTARAKTGDLNRWLRHTVEHHPPPSVQGKRIKPRYMAQMKARPPTFVLIASRGDQMPEGYKRYLVNGIREAFDMHGVPIRLFVRQGKNPYAGKVGADGPPRHKRRNN.

2 EngA-type G domains span residues 3–167 (LKLA…GPEA) and 230–405 (IRLA…KDWT). GTP contacts are provided by residues 9–16 (GRPNVGKS), 56–60 (DTAGF), 119–122 (NKAE), 236–243 (GRPNAGKS), 283–287 (DTAGL), and 348–351 (SKWD). The region spanning 406–490 (ARAKTGDLNR…PIRLFVRQGK (85 aa)) is the KH-like domain.

This sequence belongs to the TRAFAC class TrmE-Era-EngA-EngB-Septin-like GTPase superfamily. EngA (Der) GTPase family. In terms of assembly, associates with the 50S ribosomal subunit.

Its function is as follows. GTPase that plays an essential role in the late steps of ribosome biogenesis. The protein is GTPase Der of Hyphomonas neptunium (strain ATCC 15444).